Reading from the N-terminus, the 429-residue chain is Enolase (429 aa).

Q167 lines the (2R)-2-phosphoglycerate pocket. Catalysis depends on E209, which acts as the Proton donor. Mg(2+) is bound by residues D246, E289, and D316. Residues K341, R370, S371, and K392 each coordinate (2R)-2-phosphoglycerate. K341 (proton acceptor) is an active-site residue.

This sequence belongs to the enolase family. In terms of assembly, component of the RNA degradosome, a multiprotein complex involved in RNA processing and mRNA degradation. It depends on Mg(2+) as a cofactor.

It localises to the cytoplasm. It is found in the secreted. The protein resides in the cell surface. It carries out the reaction (2R)-2-phosphoglycerate = phosphoenolpyruvate + H2O. Its pathway is carbohydrate degradation; glycolysis; pyruvate from D-glyceraldehyde 3-phosphate: step 4/5. Functionally, catalyzes the reversible conversion of 2-phosphoglycerate (2-PG) into phosphoenolpyruvate (PEP). It is essential for the degradation of carbohydrates via glycolysis. The protein is Enolase of Pseudomonas putida (strain ATCC 47054 / DSM 6125 / CFBP 8728 / NCIMB 11950 / KT2440).